We begin with the raw amino-acid sequence, 434 residues long: Probable carboxypeptidase BDCG_03757 (434 aa).

The first 20 residues, 1-20 (MKLSHLAAALSAQLVAPVAA), serve as a signal peptide directing secretion. 2 N-linked (GlcNAc...) asparagine glycosylation sites follow: Asn-136 and Asn-150. Residue Asp-160 coordinates Zn(2+). Glu-192 serves as the catalytic Proton acceptor. Residue Glu-193 participates in Zn(2+) binding. The N-linked (GlcNAc...) asparagine glycan is linked to Asn-343.

It belongs to the peptidase M20A family. It depends on Zn(2+) as a cofactor.

Its subcellular location is the secreted. The chain is Probable carboxypeptidase BDCG_03757 from Ajellomyces dermatitidis (strain ER-3 / ATCC MYA-2586) (Blastomyces dermatitidis).